A 70-amino-acid chain; its full sequence is Large ribosomal subunit protein bL31 (70 aa).

Zn(2+)-binding residues include Cys16, Cys18, Cys37, and Cys40.

It belongs to the bacterial ribosomal protein bL31 family. Type A subfamily. Part of the 50S ribosomal subunit. Zn(2+) serves as cofactor.

In terms of biological role, binds the 23S rRNA. The sequence is that of Large ribosomal subunit protein bL31 from Shewanella amazonensis (strain ATCC BAA-1098 / SB2B).